Reading from the N-terminus, the 99-residue chain is Nucleoid-associated protein SpyM3_1606 (99 aa).

Belongs to the YbaB/EbfC family. As to quaternary structure, homodimer.

It is found in the cytoplasm. It localises to the nucleoid. Functionally, binds to DNA and alters its conformation. May be involved in regulation of gene expression, nucleoid organization and DNA protection. In Streptococcus pyogenes serotype M3 (strain ATCC BAA-595 / MGAS315), this protein is Nucleoid-associated protein SpyM3_1606.